Here is a 73-residue protein sequence, read N- to C-terminus: Metallothionein-like protein type 2 (73 aa).

This sequence belongs to the metallothionein superfamily. Type 15 family.

Functionally, metallothioneins have a high content of cysteine residues that bind various heavy metals. The polypeptide is Metallothionein-like protein type 2 (Solanum lycopersicum (Tomato)).